Reading from the N-terminus, the 593-residue chain is Calnexin (593 aa).

Positions 1–20 are cleaved as a signal peptide; sequence MEGKWLLCMLLVLGTTIVQA. The Lumenal portion of the chain corresponds to 21–482; the sequence is HEGHDDDMID…QMIEAAEERP (462 aa). Ca(2+) contacts are provided by Ser-75 and Asp-118. Lys-138 is modified (N6-acetyllysine). Cys-161 and Cys-195 are disulfide-bonded. Residues Tyr-165, Lys-167, Tyr-186, and Asp-193 each coordinate an alpha-D-glucoside. The tract at residues 261-346 is disordered; it reads GNLLNDMTPP…AEKPEDWDED (86 aa). The segment at 277–410 is p domain (Extended arm); it reads IEDPEDQKPE…RKIPNPDFFE (134 aa). Tandem repeats lie at residues 279–290, 296–307, 315–326, 334–345, and 349–359. 4 X approximate repeats regions lie at residues 279 to 345 and 349 to 406; these read DPED…DWDE and GEWE…IPNP. The segment covering 282 to 320 has biased composition (basic and acidic residues); sequence DQKPEDWDERPKIPDPDAVKPDDWNEDAPAKIPDEEATK. The segment covering 324-346 has biased composition (acidic residues); it reads WLDDEPEYVPDPDAEKPEDWDED. The interaction with PPIB stretch occupies residues 327–360; it reads DEPEYVPDPDAEKPEDWDEDMDGEWEAPQIANPK. A disulfide bond links Cys-361 and Cys-367. Tandem repeats lie at residues 368–378, 382–392, and 396–406. Glu-426 serves as a coordination point for an alpha-D-glucoside. Asp-437 is a binding site for Ca(2+). A helical transmembrane segment spans residues 483–503; sequence WLWVVYVLTVALPVFLVILFC. 2 S-palmitoyl cysteine lipidation sites follow: Cys-503 and Cys-504. The Cytoplasmic segment spans residues 504-593; sequence CSGKKQSSPV…SPRNRKPRRE (90 aa). The sufficient to mediate interaction with SGIP1 stretch occupies residues 504 to 593; that stretch reads CSGKKQSSPV…SPRNRKPRRE (90 aa). The tract at residues 511-593 is disordered; sequence SPVEYKKTDA…SPRNRKPRRE (83 aa). Acidic residues predominate over residues 526 to 548; it reads KEEEEEKEEEKDKGDEEEEGEEK. Ser-555 carries the post-translational modification Phosphoserine. At Thr-563 the chain carries Phosphothreonine. Ser-565 is modified (phosphoserine; by MAPK3). Phosphoserine is present on Ser-584.

This sequence belongs to the calreticulin family. As to quaternary structure, interacts with MAPK3/ERK1. Interacts with KCNH2. Associates with ribosomes. Interacts with SGIP1; involved in negative regulation of endocytosis. The palmitoylated form interacts with the ribosome-translocon complex component SSR1, promoting efficient folding of glycoproteins. Interacts with SERPINA2P/SERPINA2 and with the S and Z variants of SERPINA1. Interacts with PPIB. Interacts with ZNRF4. Interacts with SMIM22. Interacts with TMX2. Interacts with TMEM35A/NACHO and CHRNA7. Interacts with reticulophagy regulators RETREG2 and RETREG3. Interacts with DNM1L; may form part of a larger protein complex at the ER-mitochondrial interface during mitochondrial fission. Interacts with ADAM7. Phosphorylated at Ser-565 by MAPK3/ERK1. Phosphorylation by MAPK3/ERK1 increases its association with ribosomes. Post-translationally, palmitoylation by DHHC6 leads to the preferential localization to the perinuclear rough ER. It mediates the association of calnexin with the ribosome-translocon complex (RTC) which is required for efficient folding of glycosylated proteins. In terms of processing, ubiquitinated, leading to proteasomal degradation. Probably ubiquitinated by ZNRF4.

Its subcellular location is the endoplasmic reticulum membrane. It is found in the mitochondrion membrane. It localises to the melanosome membrane. In terms of biological role, calcium-binding protein that interacts with newly synthesized monoglucosylated glycoproteins in the endoplasmic reticulum. It may act in assisting protein assembly and/or in the retention within the ER of unassembled protein subunits. It seems to play a major role in the quality control apparatus of the ER by the retention of incorrectly folded proteins. Associated with partial T-cell antigen receptor complexes that escape the ER of immature thymocytes, it may function as a signaling complex regulating thymocyte maturation. Additionally it may play a role in receptor-mediated endocytosis at the synapse. The protein is Calnexin (CANX) of Canis lupus familiaris (Dog).